The following is a 113-amino-acid chain: Iron-sulfur cluster insertion protein ErpA (113 aa).

The iron-sulfur cluster site is built by C41, C105, and C107.

Belongs to the HesB/IscA family. Homodimer. It depends on iron-sulfur cluster as a cofactor.

In terms of biological role, required for insertion of 4Fe-4S clusters for at least IspG. The sequence is that of Iron-sulfur cluster insertion protein ErpA from Aliivibrio fischeri (strain ATCC 700601 / ES114) (Vibrio fischeri).